The following is a 140-amino-acid chain: uncharacterized protein (140 aa).

This is an uncharacterized protein from Xylella fastidiosa (strain Temecula1 / ATCC 700964).